Reading from the N-terminus, the 175-residue chain is Shikimate kinase (175 aa).

Residue 16-21 (GAGKST) coordinates ATP. A Mg(2+)-binding site is contributed by S20. Positions 38, 62, and 84 each coordinate substrate. R122 is an ATP binding site. R141 provides a ligand contact to substrate.

This sequence belongs to the shikimate kinase family. As to quaternary structure, monomer. Requires Mg(2+) as cofactor.

Its subcellular location is the cytoplasm. It carries out the reaction shikimate + ATP = 3-phosphoshikimate + ADP + H(+). The protein operates within metabolic intermediate biosynthesis; chorismate biosynthesis; chorismate from D-erythrose 4-phosphate and phosphoenolpyruvate: step 5/7. Catalyzes the specific phosphorylation of the 3-hydroxyl group of shikimic acid using ATP as a cosubstrate. The sequence is that of Shikimate kinase from Legionella pneumophila (strain Paris).